Reading from the N-terminus, the 504-residue chain is Anaerobic nitric oxide reductase transcription regulator NorR (504 aa).

Position 57 is a 4-aspartylphosphate (D57). The Sigma-54 factor interaction domain occupies 187-416 (MIGLSPGMTQ…LEHAIHRAVV (230 aa)). Residues 215-222 (GETGTGKE) and 278-287 (ADNGTLFLDE) contribute to the ATP site. Residues 479–498 (WAACARMLETDVANLHRLAK) constitute a DNA-binding region (H-T-H motif).

It participates in nitrogen metabolism; nitric oxide reduction. Its function is as follows. Required for the expression of anaerobic nitric oxide (NO) reductase, acts as a transcriptional activator for at least the norVW operon. Activation also requires sigma-54. In Escherichia coli (strain SE11), this protein is Anaerobic nitric oxide reductase transcription regulator NorR.